Here is a 191-residue protein sequence, read N- to C-terminus: Large ribosomal subunit protein uL3 (191 aa).

Residues 115-137 (GGPASHGSRFHRRHGSIGNREWP) are disordered.

Belongs to the universal ribosomal protein uL3 family. Part of the 50S ribosomal subunit. Forms a cluster with proteins L14 and L19.

In terms of biological role, one of the primary rRNA binding proteins, it binds directly near the 3'-end of the 23S rRNA, where it nucleates assembly of the 50S subunit. The polypeptide is Large ribosomal subunit protein uL3 (rplC) (Campylobacter jejuni subsp. jejuni serotype O:2 (strain ATCC 700819 / NCTC 11168)).